We begin with the raw amino-acid sequence, 206 residues long: Dephospho-CoA kinase (206 aa).

The DPCK domain occupies 4–200; it reads IVALTGGIGS…AYYLQLASQF (197 aa). An ATP-binding site is contributed by 12–17; sequence GSGKST.

It belongs to the CoaE family.

The protein localises to the cytoplasm. The catalysed reaction is 3'-dephospho-CoA + ATP = ADP + CoA + H(+). The protein operates within cofactor biosynthesis; coenzyme A biosynthesis; CoA from (R)-pantothenate: step 5/5. In terms of biological role, catalyzes the phosphorylation of the 3'-hydroxyl group of dephosphocoenzyme A to form coenzyme A. In Escherichia coli O6:H1 (strain CFT073 / ATCC 700928 / UPEC), this protein is Dephospho-CoA kinase.